The primary structure comprises 93 residues: Insertion element ISR1 uncharacterized 11 kDa protein A1 (93 aa).

Disordered stretches follow at residues 14–33 (RRARTTRSARPAEGPGQERR) and 68–93 (RRRAPQASDGHAATVTCRWRPTSAGR).

The chain is Insertion element ISR1 uncharacterized 11 kDa protein A1 from Rhizobium sp.